Consider the following 312-residue polypeptide: DNA primase small subunit PriS (312 aa).

Catalysis depends on residues Asp88, Asp90, and Asp215.

The protein belongs to the eukaryotic-type primase small subunit family. As to quaternary structure, heterodimer of a small subunit (PriS) and a large subunit (PriL). The cofactor is Mg(2+). Requires Mn(2+) as cofactor.

Functionally, catalytic subunit of DNA primase, an RNA polymerase that catalyzes the synthesis of short RNA molecules used as primers for DNA polymerase during DNA replication. The small subunit contains the primase catalytic core and has DNA synthesis activity on its own. Binding to the large subunit stabilizes and modulates the activity, increasing the rate of DNA synthesis while decreasing the length of the DNA fragments, and conferring RNA synthesis capability. The DNA polymerase activity may enable DNA primase to also catalyze primer extension after primer synthesis. May also play a role in DNA repair. This chain is DNA primase small subunit PriS, found in Pyrobaculum islandicum (strain DSM 4184 / JCM 9189 / GEO3).